The chain runs to 206 residues: Small ribosomal subunit protein uS4 (206 aa).

The 61-residue stretch at 96–156 folds into the S4 RNA-binding domain; sequence TRLDNVVYRM…EKSRTQARIK (61 aa).

This sequence belongs to the universal ribosomal protein uS4 family. Part of the 30S ribosomal subunit. Contacts protein S5. The interaction surface between S4 and S5 is involved in control of translational fidelity.

One of the primary rRNA binding proteins, it binds directly to 16S rRNA where it nucleates assembly of the body of the 30S subunit. In terms of biological role, with S5 and S12 plays an important role in translational accuracy. This Shewanella baltica (strain OS223) protein is Small ribosomal subunit protein uS4.